The primary structure comprises 363 residues: Cinnamyl alcohol dehydrogenase 2 (363 aa).

Cys47 is a Zn(2+) binding site. Position 49 (Thr49) interacts with NADP(+). Residues His69, Glu70, Cys100, Cys103, Cys106, Cys114, and Cys163 each coordinate Zn(2+). NADP(+) is bound by residues Thr167, 188-193 (GLGGVG), 211-216 (SSSARK), Thr251, Gly275, and 298-300 (SFI).

This sequence belongs to the zinc-containing alcohol dehydrogenase family. Homodimer. Zn(2+) is required as a cofactor. As to expression, expressed in roots behind the root tips in the pericycle region and layer of cortical cells adjacent to the exodermis. Expressed in vascular bundles and lateral veins of leaf sheaths and blades. Expressed in the vicinity of vascular bundles in the first internode below the inflorescence. Highly expressed in the culm.

The catalysed reaction is (E)-cinnamyl alcohol + NADP(+) = (E)-cinnamaldehyde + NADPH + H(+). It carries out the reaction (E)-coniferol + NADP(+) = (E)-coniferaldehyde + NADPH + H(+). The enzyme catalyses (E)-sinapyl alcohol + NADP(+) = (E)-sinapaldehyde + NADPH + H(+). It catalyses the reaction (E)-4-coumaroyl alcohol + NADP(+) = (E)-4-coumaraldehyde + NADPH + H(+). The catalysed reaction is (E)-caffeyl alcohol + NADP(+) = (E)-caffeyl aldehyde + NADPH + H(+). It functions in the pathway aromatic compound metabolism; phenylpropanoid biosynthesis. Involved in lignin biosynthesis. Catalyzes the final step specific for the production of lignin monomers. Catalyzes the NADPH-dependent reduction of coniferaldehyde and sinapaldehyde to their respective alcohols. Plays the major role in monolignol biosynthesis. Functions cooperatively with COMT in the culm internodes for the biosynthesis of monolignols, the lignin precursors. May be involved in lignin biosynthesis in leaves and roots. The protein is Cinnamyl alcohol dehydrogenase 2 of Oryza sativa subsp. japonica (Rice).